The sequence spans 451 residues: uncharacterized protein (451 aa).

The TRAM domain occupies 2–60 (NVVLKQRIPLKIKRMGINGEGIGFYKKTLIFVPGALKGEEVFCQISSVRRNFAEAKLLK). [4Fe-4S] cluster-binding residues include Cys73, Cys79, Cys82, and Cys162. S-adenosyl-L-methionine contacts are provided by Gln283, Tyr312, Asp333, and Asp381. Cys408 functions as the Nucleophile in the catalytic mechanism.

Belongs to the class I-like SAM-binding methyltransferase superfamily. RNA M5U methyltransferase family.

This is an uncharacterized protein from Streptococcus agalactiae serotype III (strain NEM316).